The chain runs to 516 residues: Putative GTP-binding protein 6 (516 aa).

Residues 18 to 39 (GRGRSAPRAAAPSCPARALAAV) are compositionally biased toward low complexity. Residues 18-82 (GRGRSAPRAA…PEDADENAEE (65 aa)) form a disordered region. Positions 57–67 (LRADGGRSRTG) are enriched in basic and acidic residues. Residues 68 to 82 (DDEEEPEDADENAEE) are compositionally biased toward acidic residues. In terms of domain architecture, Hflx-type G spans 295–459 (PVISVVGYTN…ELDAAVLKAT (165 aa)). Residues 301–308 (GYTNCGKT), 327–331 (FATLD), 349–352 (DTIG), 418–421 (NKVD), and 437–439 (SAL) each bind GTP. Mg(2+) is bound by residues threonine 308 and threonine 329.

This sequence belongs to the TRAFAC class OBG-HflX-like GTPase superfamily. HflX GTPase family. Mg(2+) is required as a cofactor. As to expression, ubiquitously expressed.

In Homo sapiens (Human), this protein is Putative GTP-binding protein 6 (GTPBP6).